Consider the following 273-residue polypeptide: Undecaprenyl-diphosphatase (273 aa).

7 consecutive transmembrane segments (helical) span residues G13–N35, V45–Y62, F82–K102, L108–V128, T186–L206, L219–L239, and F250–I270.

This sequence belongs to the UppP family.

The protein resides in the cell inner membrane. It carries out the reaction di-trans,octa-cis-undecaprenyl diphosphate + H2O = di-trans,octa-cis-undecaprenyl phosphate + phosphate + H(+). Its function is as follows. Catalyzes the dephosphorylation of undecaprenyl diphosphate (UPP). Confers resistance to bacitracin. The polypeptide is Undecaprenyl-diphosphatase (Neisseria meningitidis serogroup A / serotype 4A (strain DSM 15465 / Z2491)).